A 262-amino-acid chain; its full sequence is 1-(5-phosphoribosyl)-5-[(5-phosphoribosylamino)methylideneamino] imidazole-4-carboxamide isomerase (262 aa).

The active-site Proton acceptor is D8. Residue D129 is the Proton donor of the active site. The interval 243–262 (KDNVGQEDHSLPRCEPGPRG) is disordered.

Belongs to the HisA/HisF family.

The protein resides in the cytoplasm. The enzyme catalyses 1-(5-phospho-beta-D-ribosyl)-5-[(5-phospho-beta-D-ribosylamino)methylideneamino]imidazole-4-carboxamide = 5-[(5-phospho-1-deoxy-D-ribulos-1-ylimino)methylamino]-1-(5-phospho-beta-D-ribosyl)imidazole-4-carboxamide. It functions in the pathway amino-acid biosynthesis; L-histidine biosynthesis; L-histidine from 5-phospho-alpha-D-ribose 1-diphosphate: step 4/9. The polypeptide is 1-(5-phosphoribosyl)-5-[(5-phosphoribosylamino)methylideneamino] imidazole-4-carboxamide isomerase (Desulforudis audaxviator (strain MP104C)).